Here is a 408-residue protein sequence, read N- to C-terminus: Histidine--tRNA ligase (408 aa).

This sequence belongs to the class-II aminoacyl-tRNA synthetase family. In terms of assembly, homodimer.

The protein resides in the cytoplasm. The enzyme catalyses tRNA(His) + L-histidine + ATP = L-histidyl-tRNA(His) + AMP + diphosphate + H(+). The sequence is that of Histidine--tRNA ligase from Wolbachia pipientis wMel.